The primary structure comprises 161 residues: Phosphopantetheine adenylyltransferase (161 aa).

The protein belongs to the eukaryotic CoaD family.

The protein resides in the cytoplasm. The enzyme catalyses (R)-4'-phosphopantetheine + ATP + H(+) = 3'-dephospho-CoA + diphosphate. It functions in the pathway cofactor biosynthesis; coenzyme A biosynthesis. Reversibly transfers an adenylyl group from ATP to 4'-phosphopantetheine, yielding dephospho-CoA (dPCoA) and pyrophosphate. The polypeptide is Phosphopantetheine adenylyltransferase (Methanosarcina barkeri (strain Fusaro / DSM 804)).